The sequence spans 467 residues: Ribulose bisphosphate carboxylase large chain (467 aa).

A propeptide spanning residues Met1–Ser2 is cleaved from the precursor. Residue Pro3 is modified to N-acetylproline. Lys14 bears the N6,N6,N6-trimethyllysine mark. Residues Asn123 and Thr173 each contribute to the substrate site. Lys175 serves as the catalytic Proton acceptor. Lys177 is a binding site for substrate. Positions 201, 203, and 204 each coordinate Mg(2+). Lys201 is modified (N6-carboxylysine). His294 serves as the catalytic Proton acceptor. Substrate is bound by residues Arg295, His327, and Ser379.

Belongs to the RuBisCO large chain family. Type I subfamily. Heterohexadecamer of 8 large chains and 8 small chains; disulfide-linked. The disulfide link is formed within the large subunit homodimers. Mg(2+) serves as cofactor. Post-translationally, the disulfide bond which can form in the large chain dimeric partners within the hexadecamer appears to be associated with oxidative stress and protein turnover.

It localises to the plastid. It is found in the chloroplast. The enzyme catalyses 2 (2R)-3-phosphoglycerate + 2 H(+) = D-ribulose 1,5-bisphosphate + CO2 + H2O. It catalyses the reaction D-ribulose 1,5-bisphosphate + O2 = 2-phosphoglycolate + (2R)-3-phosphoglycerate + 2 H(+). Functionally, ruBisCO catalyzes two reactions: the carboxylation of D-ribulose 1,5-bisphosphate, the primary event in carbon dioxide fixation, as well as the oxidative fragmentation of the pentose substrate in the photorespiration process. Both reactions occur simultaneously and in competition at the same active site. This chain is Ribulose bisphosphate carboxylase large chain, found in Calamus usitatus (Palm tree).